Reading from the N-terminus, the 90-residue chain is MEASSRVTVQVLLLALVVQVTLSQHWSYGWLPGGKRSVGELEATIRMMGTGGVVSLPEEASAQTQERLRPYNVIKDDSSPFDRKKRFPNK.

An N-terminal signal peptide occupies residues 1 to 23; sequence MEASSRVTVQVLLLALVVQVTLS. At Gln-24 the chain carries Pyrrolidone carboxylic acid. A Glycine amide modification is found at Gly-33.

This sequence belongs to the GnRH family.

It localises to the secreted. In terms of biological role, stimulates the secretion of gonadotropins. The protein is Progonadoliberin-3 (gnrh3) of Sparus aurata (Gilthead sea bream).